The chain runs to 174 residues: MDVVKKSRNTHGSNDFSELIVSVRRVAKVVKGGRRFSFSVLVVIGDEKGKVGCGIGKHLEVSEAKVKAVNAARKNMIRVHLRESRTLHHDIQAKFCSSKVMLRSAKVGTGIIAGGSIRLIFEVLGVQDVVAKSIGSSNPHNVVYAVFTAFRKMLSPKQVASKRSRKIGEIIENR.

The S5 DRBM domain maps to 16–79 (FSELIVSVRR…NAARKNMIRV (64 aa)).

Belongs to the universal ribosomal protein uS5 family. In terms of assembly, part of the 30S ribosomal subunit. Contacts proteins S4 and S8.

Its function is as follows. With S4 and S12 plays an important role in translational accuracy. Functionally, located at the back of the 30S subunit body where it stabilizes the conformation of the head with respect to the body. In Ehrlichia ruminantium (strain Gardel), this protein is Small ribosomal subunit protein uS5.